A 349-amino-acid chain; its full sequence is Peroxisomal acyl-coenzyme A thioester hydrolase 1 (349 aa).

Catalysis depends on charge relay system residues D259, S282, and Q333. The short motif at 347–349 (AKF) is the Microbody targeting signal element.

This sequence belongs to the C/M/P thioester hydrolase family.

It localises to the peroxisome. The catalysed reaction is hexadecanoyl-CoA + H2O = hexadecanoate + CoA + H(+). Acyl-coenzyme A (acyl-CoA) thioesterases are a group of enzymes that catalyze the hydrolysis of acyl-CoAs to the free fatty acid and coenzyme A (CoASH), providing the potential to regulate intracellular levels of acyl-CoAs, free fatty acids and CoASH. Contributes to growth on fatty acids. The protein is Peroxisomal acyl-coenzyme A thioester hydrolase 1 (TES1) of Saccharomyces cerevisiae (strain ATCC 204508 / S288c) (Baker's yeast).